The following is a 125-amino-acid chain: MARISGVDIPDNKRGEVSLTYIYGIGRNSAQSILTKAGVNWDKKVSEWNDDEANAVRAIIASEHKTEGALKSEVQLSIKRLMDIGCYRGLRHRKGLPVRGQRTKNNCRTRKGKRKTVANKKKATK.

Positions 95–125 are disordered; sequence GLPVRGQRTKNNCRTRKGKRKTVANKKKATK.

The protein belongs to the universal ribosomal protein uS13 family. Part of the 30S ribosomal subunit. Forms a loose heterodimer with protein S19. Forms two bridges to the 50S subunit in the 70S ribosome.

Its function is as follows. Located at the top of the head of the 30S subunit, it contacts several helices of the 16S rRNA. In the 70S ribosome it contacts the 23S rRNA (bridge B1a) and protein L5 of the 50S subunit (bridge B1b), connecting the 2 subunits; these bridges are implicated in subunit movement. Contacts the tRNAs in the A and P-sites. The protein is Small ribosomal subunit protein uS13 of Cytophaga hutchinsonii (strain ATCC 33406 / DSM 1761 / CIP 103989 / NBRC 15051 / NCIMB 9469 / D465).